The following is a 55-amino-acid chain: MAKATTIKIKLLSTADTGFFYVTTKNSRTMTDKMTKTKYDPIARKHVEFKETKIK.

This sequence belongs to the bacterial ribosomal protein bL33 family.

In Allorhizobium ampelinum (strain ATCC BAA-846 / DSM 112012 / S4) (Agrobacterium vitis (strain S4)), this protein is Large ribosomal subunit protein bL33.